The sequence spans 1116 residues: cGMP-specific 3',5'-cyclic phosphodiesterase (1116 aa).

Disordered stretches follow at residues 1–36 and 82–136; these read MTDV…NGAA and KSEC…ATQQ. A compositionally biased stretch (low complexity) spans 15–28; sequence VSSTSSEVAVETTS. Residues 86–136 show a composition bias toward polar residues; it reads HSQSNNNQHVETAPSKQSSDSEASAPTTVSIPSANAKINSSSSGKTTATQQ. 2 consecutive GAF domains span residues 241-393 and 425-611; these read DIDV…GIGI and NLEC…GLGI. The region spanning 641-964 is the PDEase domain; the sequence is SQDQTEKLAQ…RNWQDLAEKV (324 aa). The active-site Proton donor is H717. Residues H721, H757, D758, and D868 each coordinate a divalent metal cation. Disordered stretches follow at residues 1005–1031 and 1067–1116; these read QHGG…LSIK and HVSE…CALL. Composition is skewed to basic and acidic residues over residues 1014-1023 and 1067-1076; these read EDTHTPEHQR and HVSEDMDDKS. Over residues 1085–1103 the composition is skewed to low complexity; it reads SGSVGRMSASSSTSSAGTV. Positions 1106-1116 are enriched in basic residues; that stretch reads SKKRSKLCALL. C1113 is modified (cysteine methyl ester). C1113 carries the S-farnesyl cysteine lipid modification. A propeptide spans 1114-1116 (removed in mature form); sequence ALL.

Belongs to the cyclic nucleotide phosphodiesterase family. In terms of assembly, interacts with PrBP. A divalent metal cation is required as a cofactor.

Its subcellular location is the cell membrane. The enzyme catalyses 3',5'-cyclic GMP + H2O = GMP + H(+). Has a role regulating cGMP transport in Malpighian tubule principal cells. This is cGMP-specific 3',5'-cyclic phosphodiesterase from Drosophila mojavensis (Fruit fly).